Consider the following 116-residue polypeptide: Signal recognition particle 14 kDa protein (116 aa).

Belongs to the SRP14 family. As to quaternary structure, heterodimer with ZK512.4/SRP9; binds RNA as heterodimer. Component of a signal recognition particle (SRP) complex that consists of a 7SL RNA molecule of 300 nucleotides and six protein subunits: srpa-72, srpa-68, SRP54, F37F2.2/SRP19, F25G6.8/SRP14 and ZK512.4/SRP9.

The protein resides in the cytoplasm. Component of the signal recognition particle (SRP) complex, a ribonucleoprotein complex that mediates the cotranslational targeting of secretory and membrane proteins to the endoplasmic reticulum (ER). F37F2.2/srpa-19 together with F25G6.8/srpa-14 and the Alu portion of the SRP RNA, constitutes the elongation arrest domain of SRP. The complex of F37F2.2/srpa-19 and F25G6.8/srpa-14 is required for SRP RNA binding. This chain is Signal recognition particle 14 kDa protein, found in Caenorhabditis elegans.